Consider the following 193-residue polypeptide: Protein PATRONUS 1 (193 aa).

The DEN-box signature appears at 14 to 16 (DEN). The D-box motif lies at 46–49 (RKAL).

As to quaternary structure, interacts directly with the anaphase promoting complex/cyclosome (APC/C) through the CDC27B and CDC20-1 subunits. As to expression, expressed in somatic and reproductive tissues. Expressed in inflorescence, young buds, roots and basal portion of young leaves. Expressed in proliferating cells such as apical meristems of roots and shoots, expanding cotyledons and leaves, root vascular tissues, and in stomatal precursor cells.

The protein resides in the nucleus. Its subcellular location is the cytoplasm. Required for the maintenance of centromeric cohesion during interkinesis, until meiosis II. Required for regular configuration and segregation of sister chromatids in meiosis II. Also required for centromere cohesion during meiosis I. Involved in spindle organization at the end of telophase I and in meiosis II. Required to prevent precocious release of pericentromeric cohesins during meiosis, but not for cohesion establishment and monopolar orientation of kinetochores at meiosis I. Involved also in somatic development. Regulates mitotic cell division and ploidy stability in somatic cell types. May be involved in the organization of microtubules dynamics. Involved in abiotic stresses and mono- or divalent ions tolerance and may play a role in maintaining meristematic activity under saline conditions. PANS1 and GIG1 are part of a network linking centromere cohesion and cell cycle progression through control of APC/C activity. Regulates the number of dividing cells in root meristem and is necessary for the anaphase onset control through an APC/C-mediated pathway. Involved in maintaining correct chromosome arm cohesion under stress conditions. The protein is Protein PATRONUS 1 of Arabidopsis thaliana (Mouse-ear cress).